Consider the following 93-residue polypeptide: Small ribosomal subunit protein uS19 (93 aa).

The disordered stretch occupies residues 72–93; it reads GEFSPTRTYRGHNKKDKKMQKK. Positions 80-93 are enriched in basic residues; the sequence is YRGHNKKDKKMQKK.

It belongs to the universal ribosomal protein uS19 family.

Its function is as follows. Protein S19 forms a complex with S13 that binds strongly to the 16S ribosomal RNA. This Aster yellows witches'-broom phytoplasma (strain AYWB) protein is Small ribosomal subunit protein uS19.